We begin with the raw amino-acid sequence, 337 residues long: Serpentine receptor class delta-18 (337 aa).

The next 6 membrane-spanning stretches (helical) occupy residues 2–22 (IIFFEIWHWSWALLGCYLNLL), 90–110 (VGLSFFLHCLTHSVWSLLLSF), 130–150 (LILVFYIPSLIQALTYWTIFA), 187–207 (IYSIGHICLPFFPVYITIFIL), 236–256 (ALTIQAFIPIFVGIAVTFYFL), and 270–290 (SIYAVAILAPALSPITYLYFV).

The protein belongs to the nematode receptor-like protein srd family.

It localises to the membrane. The protein is Serpentine receptor class delta-18 (srd-18) of Caenorhabditis elegans.